A 396-amino-acid polypeptide reads, in one-letter code: Ribosomal RNA large subunit methyltransferase I (396 aa).

The PUA domain maps to 2–81; it reads SVRLVLAKGR…ESIDIAFFTR (80 aa).

This sequence belongs to the methyltransferase superfamily. RlmI family.

It is found in the cytoplasm. The catalysed reaction is cytidine(1962) in 23S rRNA + S-adenosyl-L-methionine = 5-methylcytidine(1962) in 23S rRNA + S-adenosyl-L-homocysteine + H(+). Specifically methylates the cytosine at position 1962 (m5C1962) of 23S rRNA. The chain is Ribosomal RNA large subunit methyltransferase I from Escherichia coli O127:H6 (strain E2348/69 / EPEC).